Here is a 118-residue protein sequence, read N- to C-terminus: Large ribosomal subunit protein bL19 (118 aa).

The protein belongs to the bacterial ribosomal protein bL19 family.

In terms of biological role, this protein is located at the 30S-50S ribosomal subunit interface and may play a role in the structure and function of the aminoacyl-tRNA binding site. This Saccharophagus degradans (strain 2-40 / ATCC 43961 / DSM 17024) protein is Large ribosomal subunit protein bL19.